Consider the following 115-residue polypeptide: NADH-ubiquinone oxidoreductase chain 3 (115 aa).

3 helical membrane passes run 4–24, 55–75, and 84–104; these read IMAM…AFWL, FFLV…LLPL, and MFLT…GLAY.

The protein belongs to the complex I subunit 3 family. As to quaternary structure, core subunit of respiratory chain NADH dehydrogenase (Complex I) which is composed of 45 different subunits. Interacts with TMEM186. Interacts with TMEM242.

It is found in the mitochondrion inner membrane. The catalysed reaction is a ubiquinone + NADH + 5 H(+)(in) = a ubiquinol + NAD(+) + 4 H(+)(out). Its function is as follows. Core subunit of the mitochondrial membrane respiratory chain NADH dehydrogenase (Complex I) which catalyzes electron transfer from NADH through the respiratory chain, using ubiquinone as an electron acceptor. Essential for the catalytic activity of complex I. This Phyllotis darwinii (Darwin's leaf-eared mouse) protein is NADH-ubiquinone oxidoreductase chain 3.